The primary structure comprises 129 residues: Small ribosomal subunit protein uS8 (129 aa).

This sequence belongs to the universal ribosomal protein uS8 family. In terms of assembly, part of the 30S ribosomal subunit. Contacts proteins S5 and S12.

Functionally, one of the primary rRNA binding proteins, it binds directly to 16S rRNA central domain where it helps coordinate assembly of the platform of the 30S subunit. The protein is Small ribosomal subunit protein uS8 of Spiroplasma kunkelii.